The sequence spans 105 residues: Guanyl-specific ribonuclease Ms (105 aa).

Cystine bridges form between Cys-3–Cys-11 and Cys-7–Cys-102. His-39 is an active-site residue. Glu-57 functions as the Proton acceptor in the catalytic mechanism. His-91 (proton donor) is an active-site residue.

The protein belongs to the ribonuclease N1/T1 family.

It carries out the reaction [RNA] containing guanosine + H2O = an [RNA fragment]-3'-guanosine-3'-phosphate + a 5'-hydroxy-ribonucleotide-3'-[RNA fragment].. The sequence is that of Guanyl-specific ribonuclease Ms from Aspergillus phoenicis (Aspergillus saitoi).